Reading from the N-terminus, the 403-residue chain is Dual-specificity RNA methyltransferase RlmN (403 aa).

Glu-121 functions as the Proton acceptor in the catalytic mechanism. Residues 127–375 (ETDRGTLCVS…VRTPRGRDIL (249 aa)) enclose the Radical SAM core domain. Cys-134 and Cys-378 form a disulfide bridge. [4Fe-4S] cluster contacts are provided by Cys-141, Cys-145, and Cys-148. S-adenosyl-L-methionine contacts are provided by residues 204 to 205 (GE), Ser-236, 258 to 260 (SLH), and Asn-335. The active-site S-methylcysteine intermediate is Cys-378.

It belongs to the radical SAM superfamily. RlmN family. Requires [4Fe-4S] cluster as cofactor.

The protein resides in the cytoplasm. The catalysed reaction is adenosine(2503) in 23S rRNA + 2 reduced [2Fe-2S]-[ferredoxin] + 2 S-adenosyl-L-methionine = 2-methyladenosine(2503) in 23S rRNA + 5'-deoxyadenosine + L-methionine + 2 oxidized [2Fe-2S]-[ferredoxin] + S-adenosyl-L-homocysteine. The enzyme catalyses adenosine(37) in tRNA + 2 reduced [2Fe-2S]-[ferredoxin] + 2 S-adenosyl-L-methionine = 2-methyladenosine(37) in tRNA + 5'-deoxyadenosine + L-methionine + 2 oxidized [2Fe-2S]-[ferredoxin] + S-adenosyl-L-homocysteine. In terms of biological role, specifically methylates position 2 of adenine 2503 in 23S rRNA and position 2 of adenine 37 in tRNAs. m2A2503 modification seems to play a crucial role in the proofreading step occurring at the peptidyl transferase center and thus would serve to optimize ribosomal fidelity. The chain is Dual-specificity RNA methyltransferase RlmN from Rhodopseudomonas palustris (strain BisA53).